A 202-amino-acid polypeptide reads, in one-letter code: Large ribosomal subunit protein bL17 (202 aa).

The interval 132-202 is disordered; sequence DAAQKAASAG…TEVEKADDDK (71 aa). Over residues 134 to 168 the composition is skewed to low complexity; the sequence is AQKAASAGAQEVTAAAAPQAAVEPEAVETEASAET. A compositionally biased stretch (acidic residues) spans 169–193; that stretch reads AEAEVETAEVEAVDEASAEEADEAT.

The protein belongs to the bacterial ribosomal protein bL17 family. As to quaternary structure, part of the 50S ribosomal subunit. Contacts protein L32.

This is Large ribosomal subunit protein bL17 from Mycolicibacterium vanbaalenii (strain DSM 7251 / JCM 13017 / BCRC 16820 / KCTC 9966 / NRRL B-24157 / PYR-1) (Mycobacterium vanbaalenii).